The chain runs to 180 residues: Ribulose bisphosphate carboxylase small subunit, chloroplastic 4 (180 aa).

A chloroplast-targeting transit peptide spans 1–56 (MASSIVSSAAVATRGNGAQASMVAPFTGLKSTASFPVSRKQNLDITSIASNGGRVS).

This sequence belongs to the RuBisCO small chain family. Heterohexadecamer of 8 large and 8 small subunits. As to quaternary structure, (Microbial infection) Binds to tobamovirus movement protein; this interaction seems required for viral systemic movement.

The protein resides in the plastid. Its subcellular location is the chloroplast. It localises to the cell junction. The protein localises to the plasmodesma. RuBisCO catalyzes two reactions: the carboxylation of D-ribulose 1,5-bisphosphate, the primary event in carbon dioxide fixation, as well as the oxidative fragmentation of the pentose substrate. Both reactions occur simultaneously and in competition at the same active site. Although the small subunit is not catalytic it is essential for maximal activity. Involved in antiviral defenses. The polypeptide is Ribulose bisphosphate carboxylase small subunit, chloroplastic 4 (Solanum lycopersicum (Tomato)).